A 270-amino-acid chain; its full sequence is Phosphonoacetaldehyde hydrolase (270 aa).

Asp11 serves as the catalytic Nucleophile. Residues Asp11 and Ala13 each coordinate Mg(2+). The active-site Schiff-base intermediate with substrate is the Lys53. Asp187 contacts Mg(2+).

The protein belongs to the HAD-like hydrolase superfamily. PhnX family. In terms of assembly, homodimer. Mg(2+) is required as a cofactor.

It catalyses the reaction phosphonoacetaldehyde + H2O = acetaldehyde + phosphate + H(+). In terms of biological role, involved in phosphonate degradation. This Salmonella paratyphi C (strain RKS4594) protein is Phosphonoacetaldehyde hydrolase.